We begin with the raw amino-acid sequence, 460 residues long: Fumarate hydratase class II (460 aa).

Substrate contacts are provided by residues 95–97, 126–129, 136–138, and Thr-184; these read SGT, HPND, and SSN. His-185 acts as the Proton donor/acceptor in catalysis. Residue Ser-315 is part of the active site. Residues Ser-316 and 321-323 contribute to the substrate site; that span reads KVN.

This sequence belongs to the class-II fumarase/aspartase family. Fumarase subfamily. Homotetramer.

Its subcellular location is the cytoplasm. The catalysed reaction is (S)-malate = fumarate + H2O. The protein operates within carbohydrate metabolism; tricarboxylic acid cycle; (S)-malate from fumarate: step 1/1. Functionally, involved in the TCA cycle. Catalyzes the stereospecific interconversion of fumarate to L-malate. This chain is Fumarate hydratase class II, found in Chlamydia pneumoniae (Chlamydophila pneumoniae).